A 525-amino-acid chain; its full sequence is Estrogen receptor (525 aa).

The segment at 1-59 (PTSPLVFVPSSPRLSPFMHPPSHHYLETTSTPVYRSSVSSSQQQLSREDQCGTSDDSYS) is disordered. The segment at 1 to 82 (PTSPLVFVPS…GFEMAKEMRF (82 aa)) is modulating. Residues 36–45 (SSVSSSQQQL) show a composition bias toward low complexity. NR C4-type zinc fingers lie at residues 83 to 103 (CAVC…CEGC) and 119 to 143 (CPAT…LRKC). Residues 83–148 (CAVCSDYASG…RLRKCYQVGM (66 aa)) constitute a DNA-binding region (nuclear receptor). Residues 149-209 (MKGGVRKDRG…GGGKSSIIGM (61 aa)) are hinge. Basic and acidic residues predominate over residues 154-182 (RKDRGRVLRRDKRRTGTSDKASKDLEHRT). A disordered region spans residues 154–203 (RKDRGRVLRRDKRRTGTSDKASKDLEHRTAPPQDRRKHSSSSSSAGGGGK). The NR LBD domain occupies 210–446 (SPDQVLLLLQ…DLLLEMLDAH (237 aa)). Positions 452–465 (DRPAESWSQADREP) are enriched in basic and acidic residues. Positions 452-525 (DRPAESWSQA…GPRSDCTHIL (74 aa)) are disordered. Over residues 479 to 493 (SGGGDGGPSSAGSGS) the composition is skewed to gly residues.

This sequence belongs to the nuclear hormone receptor family. NR3 subfamily. In terms of assembly, binds DNA as a homodimer. Can form a heterodimer with ER-beta. In terms of tissue distribution, abundant in the liver, less abundant in the testes and barely detectable in the ovary and brain.

The protein resides in the nucleus. Functionally, the steroid hormones and their receptors are involved in the regulation of eukaryotic gene expression and affect cellular proliferation and differentiation in target tissues. The chain is Estrogen receptor (esr1) from Micropogonias undulatus (Atlantic croaker).